Consider the following 306-residue polypeptide: Pantothenate kinase (306 aa).

91 to 98 (GSVAVGKS) is a binding site for ATP.

This sequence belongs to the prokaryotic pantothenate kinase family.

The protein localises to the cytoplasm. The catalysed reaction is (R)-pantothenate + ATP = (R)-4'-phosphopantothenate + ADP + H(+). Its pathway is cofactor biosynthesis; coenzyme A biosynthesis; CoA from (R)-pantothenate: step 1/5. This chain is Pantothenate kinase (coaA), found in Streptococcus pyogenes serotype M3 (strain ATCC BAA-595 / MGAS315).